We begin with the raw amino-acid sequence, 887 residues long: Chaperone protein ClpB 2 (887 aa).

The Clp R domain maps to 6 to 147 (PTKFTDKAWE…AATVKAIRGA (142 aa)). 2 repeat regions span residues 9–73 (FTDK…ARQQ) and 84–147 (CGRS…IRGA). The tract at residues 160–342 (AALEKYGRDL…RRFQQVYIGQ (183 aa)) is NBD1. 207–214 (GEPGVGKT) contacts ATP. The segment at 343 to 559 (PSVEDTISIL…IAEIVAKWTG (217 aa)) is linker. The stretch at 393-535 (IDLVDEAAAK…TEAQLLELQA (143 aa)) forms a coiled coil. The NBD2 stretch occupies residues 569–780 (ERQKLLQLEQ…RIDDVILFHG (212 aa)). 619–626 (GPTGVGKT) serves as a coordination point for ATP. The segment at 781–887 (LGRTELAQIA…TGDRDTVSAS (107 aa)) is C-terminal.

The protein belongs to the ClpA/ClpB family. In terms of assembly, homohexamer. The oligomerization is ATP-dependent.

It localises to the cytoplasm. In terms of biological role, part of a stress-induced multi-chaperone system, it is involved in the recovery of the cell from heat-induced damage, in cooperation with DnaK, DnaJ and GrpE. Acts before DnaK, in the processing of protein aggregates. Protein binding stimulates the ATPase activity; ATP hydrolysis unfolds the denatured protein aggregates, which probably helps expose new hydrophobic binding sites on the surface of ClpB-bound aggregates, contributing to the solubilization and refolding of denatured protein aggregates by DnaK. The protein is Chaperone protein ClpB 2 (clpB2) of Thermosynechococcus vestitus (strain NIES-2133 / IAM M-273 / BP-1).